We begin with the raw amino-acid sequence, 25 residues long: Conotoxin QcVIA (25 aa).

Disulfide bonds link cysteine 4-cysteine 12, cysteine 7-cysteine 17, and cysteine 11-cysteine 22. 4-hydroxyproline is present on proline 5.

As to expression, expressed by the venom duct.

The protein localises to the secreted. Functionally, causes scratching and restlessness in mice. In Conus quercinus (Oak cone), this protein is Conotoxin QcVIA.